A 136-amino-acid polypeptide reads, in one-letter code: Protein NrdI (136 aa).

The protein belongs to the NrdI family.

Its function is as follows. Probably involved in ribonucleotide reductase function. The chain is Protein NrdI from Escherichia coli (strain 55989 / EAEC).